Consider the following 576-residue polypeptide: Plant intracellular Ras-group-related LRR protein 4 (576 aa).

Residues 130–151 show a composition bias toward low complexity; sequence AAPAAATTTTSTAAAGSSSSSA. The tract at residues 130–181 is disordered; that stretch reads AAPAAATTTTSTAAAGSSSSSAVGNAERHASSGTNGFTASRVAGTSTSTGRV. Over residues 160 to 180 the composition is skewed to polar residues; the sequence is SSGTNGFTASRVAGTSTSTGR. 11 LRR repeats span residues 272 to 295, 296 to 318, 320 to 341, 342 to 364, 366 to 387, 389 to 410, 411 to 433, 434 to 456, 458 to 481, 482 to 503, and 505 to 527; these read LTGL…IGKL, FSLA…IGDL, SLIY…IGRL, LNLE…IGSL, RLKK…IGHC, SLVE…VGKL, EPLE…MASL, TKLK…FCFA, SLIK…IGNL, EMLE…SFGN, and KHLR…IALK. A GVYW; degenerate motif is present at residues 528–535; sequence GAQAVVQY.

Belongs to the SHOC2 family. In terms of tissue distribution, widely expressed.

Functionally, leucine-rich repeat protein that likely mediates protein interactions, possibly in the context of signal transduction. The sequence is that of Plant intracellular Ras-group-related LRR protein 4 (IRL4) from Oryza sativa subsp. japonica (Rice).